A 309-amino-acid polypeptide reads, in one-letter code: Carbamate kinase-like protein (309 aa).

Residues 125–144 (NKPVGPFYNTEETARSANPN) are disordered.

Belongs to the carbamate kinase family.

The protein is Carbamate kinase-like protein of Mycoplasma pneumoniae (strain ATCC 29342 / M129 / Subtype 1) (Mycoplasmoides pneumoniae).